An 888-amino-acid polypeptide reads, in one-letter code: Bifunctional lysine-specific demethylase and histidyl-hydroxylase NO66 (888 aa).

Disordered regions lie at residues 83–157 (AAAK…GSFS), 187–208 (SNNSDFDFDSDGDSNDFDDSDA), and 261–446 (NSTS…NKLS). Over residues 98–108 (REKNIAKKQPE) the composition is skewed to basic and acidic residues. A compositionally biased stretch (polar residues) spans 116 to 139 (ENVQKQLENGQENNGTLINLSNGK). Acidic residues predominate over residues 192–207 (FDFDSDGDSNDFDDSD). The span at 273–284 (VEPRKAAKRNEP) shows a compositional bias: basic and acidic residues. The span at 392–403 (KNKNNDNNNIDT) shows a compositional bias: low complexity. Basic and acidic residues predominate over residues 404–429 (NNKKDANNKKDANNNKDINNKKDANN). The span at 430-444 (NKDTNNNKDNNNKNK) shows a compositional bias: low complexity. The region spanning 564-709 (CSIRILNPST…NLLEVLMPSV (146 aa)) is the JmjC domain. Residues His-610, Asp-612, and His-675 each coordinate Fe cation.

Belongs to the ROX family. NO66 subfamily. Fe(2+) is required as a cofactor.

The protein resides in the nucleus. The enzyme catalyses N(6),N(6)-dimethyl-L-lysyl(36)-[histone H3] + 2 2-oxoglutarate + 2 O2 = L-lysyl(36)-[histone H3] + 2 formaldehyde + 2 succinate + 2 CO2. In terms of biological role, oxygenase that can act as both a histone lysine demethylase and a ribosomal histidine hydroxylase. Specifically demethylates 'Lys-4' (H3K4me) and 'Lys-36' (H3K36me) of histone H3, thereby playing a central role in histone code. The polypeptide is Bifunctional lysine-specific demethylase and histidyl-hydroxylase NO66 (Drosophila mojavensis (Fruit fly)).